A 363-amino-acid chain; its full sequence is NAD(P)H-quinone oxidoreductase subunit 1, chloroplastic (363 aa).

The next 6 membrane-spanning stretches (helical) occupy residues I26–V46, F98–F118, L127–M147, F253–V273, V300–I320, and L336–T356.

The protein belongs to the complex I subunit 1 family. As to quaternary structure, NDH is composed of at least 16 different subunits, 5 of which are encoded in the nucleus.

Its subcellular location is the plastid. It localises to the chloroplast thylakoid membrane. The catalysed reaction is a plastoquinone + NADH + (n+1) H(+)(in) = a plastoquinol + NAD(+) + n H(+)(out). It catalyses the reaction a plastoquinone + NADPH + (n+1) H(+)(in) = a plastoquinol + NADP(+) + n H(+)(out). Functionally, NDH shuttles electrons from NAD(P)H:plastoquinone, via FMN and iron-sulfur (Fe-S) centers, to quinones in the photosynthetic chain and possibly in a chloroplast respiratory chain. The immediate electron acceptor for the enzyme in this species is believed to be plastoquinone. Couples the redox reaction to proton translocation, and thus conserves the redox energy in a proton gradient. The chain is NAD(P)H-quinone oxidoreductase subunit 1, chloroplastic from Helianthus annuus (Common sunflower).